The chain runs to 424 residues: Glutamyl-tRNA reductase (424 aa).

Residues 49-52 (TCNR), Ser-105, 110-112 (EPQ), and Gln-116 each bind substrate. Residue Cys-50 is the Nucleophile of the active site. 185 to 190 (GSGETA) is an NADP(+) binding site.

Belongs to the glutamyl-tRNA reductase family. In terms of assembly, homodimer.

The catalysed reaction is (S)-4-amino-5-oxopentanoate + tRNA(Glu) + NADP(+) = L-glutamyl-tRNA(Glu) + NADPH + H(+). It functions in the pathway porphyrin-containing compound metabolism; protoporphyrin-IX biosynthesis; 5-aminolevulinate from L-glutamyl-tRNA(Glu): step 1/2. Functionally, catalyzes the NADPH-dependent reduction of glutamyl-tRNA(Glu) to glutamate 1-semialdehyde (GSA). In Legionella pneumophila (strain Corby), this protein is Glutamyl-tRNA reductase.